A 502-amino-acid chain; its full sequence is 2,3-bisphosphoglycerate-independent phosphoglycerate mutase (502 aa).

Mn(2+) is bound by residues D12 and S62. S62 serves as the catalytic Phosphoserine intermediate. Residues H123, 152–153 (RD), R183, R189, 255–258 (RPDR), and K329 contribute to the substrate site. The Mn(2+) site is built by D394, H398, D435, H436, and H453.

This sequence belongs to the BPG-independent phosphoglycerate mutase family. In terms of assembly, monomer. Mn(2+) is required as a cofactor.

The catalysed reaction is (2R)-2-phosphoglycerate = (2R)-3-phosphoglycerate. It functions in the pathway carbohydrate degradation; glycolysis; pyruvate from D-glyceraldehyde 3-phosphate: step 3/5. Its function is as follows. Catalyzes the interconversion of 2-phosphoglycerate and 3-phosphoglycerate. The sequence is that of 2,3-bisphosphoglycerate-independent phosphoglycerate mutase from Malacoplasma penetrans (strain HF-2) (Mycoplasma penetrans).